The chain runs to 508 residues: Mu-like prophage FluMu protein gp28 (508 aa).

This sequence to phage Mu protein gp28.

The polypeptide is Mu-like prophage FluMu protein gp28 (Haemophilus influenzae (strain ATCC 51907 / DSM 11121 / KW20 / Rd)).